Here is a 1381-residue protein sequence, read N- to C-terminus: DNA-directed RNA polymerase subunit beta'' (1381 aa).

Residues Cys-224, Cys-295, Cys-302, and Cys-305 each contribute to the Zn(2+) site.

Belongs to the RNA polymerase beta' chain family. RpoC2 subfamily. In plastids the minimal PEP RNA polymerase catalytic core is composed of four subunits: alpha, beta, beta', and beta''. When a (nuclear-encoded) sigma factor is associated with the core the holoenzyme is formed, which can initiate transcription. Requires Zn(2+) as cofactor.

It localises to the plastid. The protein localises to the chloroplast. The catalysed reaction is RNA(n) + a ribonucleoside 5'-triphosphate = RNA(n+1) + diphosphate. Its function is as follows. DNA-dependent RNA polymerase catalyzes the transcription of DNA into RNA using the four ribonucleoside triphosphates as substrates. The sequence is that of DNA-directed RNA polymerase subunit beta'' from Lactuca sativa (Garden lettuce).